Here is an 84-residue protein sequence, read N- to C-terminus: Large ribosomal subunit protein bL27 (84 aa).

The tract at residues 1–21 (MAHKKGGGSTKNGRDSNPQYL) is disordered.

It belongs to the bacterial ribosomal protein bL27 family.

The polypeptide is Large ribosomal subunit protein bL27 (Chloroherpeton thalassium (strain ATCC 35110 / GB-78)).